Here is a 248-residue protein sequence, read N- to C-terminus: Ribonuclease 3 (248 aa).

The RNase III domain maps to 16–145; that stretch reads TEGLETSIGY…LLAAMYLDGG (130 aa). E58 contacts Mg(2+). D62 is a catalytic residue. Positions 131 and 134 each coordinate Mg(2+). E134 is an active-site residue. The 70-residue stretch at 172–241 folds into the DRBM domain; sequence DFKTDFQELA…ARQCLERLET (70 aa).

It belongs to the ribonuclease III family. As to quaternary structure, homodimer. It depends on Mg(2+) as a cofactor.

It localises to the cytoplasm. The enzyme catalyses Endonucleolytic cleavage to 5'-phosphomonoester.. Digests double-stranded RNA. Involved in the processing of primary rRNA transcript to yield the immediate precursors to the large and small rRNAs (23S and 16S). Processes some mRNAs, and tRNAs when they are encoded in the rRNA operon. Processes pre-crRNA and tracrRNA of type II CRISPR loci if present in the organism. The polypeptide is Ribonuclease 3 (Geobacter sulfurreducens (strain ATCC 51573 / DSM 12127 / PCA)).